We begin with the raw amino-acid sequence, 43 residues long: uncharacterized protein (43 aa).

Residues 21 to 41 (SSFALIVVLFILLIIVGAAIF) form a helical membrane-spanning segment.

Belongs to the SscA family.

It localises to the membrane. This is an uncharacterized protein from Bacillus subtilis (strain 168).